We begin with the raw amino-acid sequence, 429 residues long: Phosphoribosylamine--glycine ligase (429 aa).

The 208-residue stretch at 109 to 316 (KDFLARHNIP…LVELCQAAIA (208 aa)) folds into the ATP-grasp domain. ATP is bound at residue 135-196 (VREKGAPIVV…EEFLDGEEAS (62 aa)). Mg(2+)-binding residues include glutamate 286 and asparagine 288.

This sequence belongs to the GARS family. Requires Mg(2+) as cofactor. Mn(2+) serves as cofactor.

The enzyme catalyses 5-phospho-beta-D-ribosylamine + glycine + ATP = N(1)-(5-phospho-beta-D-ribosyl)glycinamide + ADP + phosphate + H(+). The protein operates within purine metabolism; IMP biosynthesis via de novo pathway; N(1)-(5-phospho-D-ribosyl)glycinamide from 5-phospho-alpha-D-ribose 1-diphosphate: step 2/2. This is Phosphoribosylamine--glycine ligase from Vibrio cholerae serotype O1 (strain ATCC 39315 / El Tor Inaba N16961).